Consider the following 95-residue polypeptide: Turripeptide OL184 (95 aa).

Contains 5 disulfide bonds. As to expression, expressed by the venom duct.

Its subcellular location is the secreted. In terms of biological role, acts as a neurotoxin by inhibiting an ion channel. The chain is Turripeptide OL184 from Iotyrris olangoensis (Sea snail).